The sequence spans 267 residues: X-box-binding protein 1 (267 aa).

The Cytoplasmic portion of the chain corresponds to 1-180; that stretch reads MVVVAAAPSA…VQAQLSPPQN (180 aa). The tract at residues 35-56 is disordered; the sequence is VPGPRAAGSEASGTPQARKRQR. Ser61 carries the phosphoserine modification. Positions 63–126 constitute a bZIP domain; it reads EEKALRRKLK…HGLVVENQEL (64 aa). The interval 65–87 is basic motif; that stretch reads KALRRKLKNRVAAQTARDRKKAR. The interval 69–85 is nuclear localization signal (NLS); it reads RKLKNRVAAQTARDRKK. Positions 91 to 126 are leucine-zipper; that stretch reads LEQQVVDLEEENHKLQLENQLLREKTHGLVVENQEL. A helical; Signal-anchor for type II membrane protein membrane pass occupies residues 181 to 198; it reads IFPWTLTLLPLQILSLIS. Over 199-267 the chain is Lumenal; sequence FWAFWTSWTL…FVLTMYTPSL (69 aa). The interval 230 to 256 is necessary for the translational pausing of its own mRNA; it reads QKDLVPYQPPFLCQWGPHQPSWKPLMN.

This sequence belongs to the bZIP family. As to quaternary structure, isoform 1 interacts with HM13. Isoform 1 interacts with RNF139; the interaction induces ubiquitination and degradation of isoform 1. Isoform 1 interacts (via luminal domain) with DERL1; the interaction obviates the need for ectodomain shedding prior HM13/SPP-mediated XBP1 isoform 1 cleavage. Isoform 1 interacts with isoform 2; the interaction sequesters isoform 2 from the nucleus and enhances isoform 2 degradation in the cytoplasm. Isoform 1 interacts with HDAC3 and AKT1; the interactions occur in endothelial cell (EC) under disturbed flow. Isoform 1 interacts with the oncoprotein FOS. Isoform 2 interacts with ATF6; the interaction occurs in a ER stress-dependent manner and is required for DNA binding to the unfolded protein response element (UPRE). Isoform 2 interacts with PIK3R1; the interaction is direct and induces translocation of XBP1 isoform 2 into the nucleus and the unfolded protein response (UPR) XBP1-dependent target genes activation in a ER stress- and/or insulin-dependent but PI3K-independent manner. Isoform 2 interacts with SIRT1. Isoform 2 interacts with PIK3R1 and PIK3R2; the interactions are direct and induce translocation of XBP1 isoform 2 into the nucleus and the unfolded protein response (UPR) XBP1-dependent target genes activation in a ER stress- and/or insulin-dependent but PI3K-independent manner. Isoform 2 interacts with FOXO1; the interaction is direct and leads to FOXO1 ubiquitination and degradation via the proteasome pathway in hepatocytes. Post-translationally, acetylated by EP300; acetylation positively regulates the transcriptional activity of XBP1 isoform 2. Isoform 2 is deacetylated by SIRT1; deacetylation negatively regulates the transcriptional activity of XBP1 isoform 2. Ubiquitinated, leading to proteasomal degradation in response to ER stress. In terms of processing, X-box-binding protein 1, cytoplasmic form and luminal form are produced by intramembrane proteolytic cleavage of ER membrane-anchored isoform 1 triggered by HM13/SPP in a DERL1-RNF139-dependent and VCP/p97-independent manner. X-box-binding protein 1, luminal form is ubiquitinated leading to proteasomal degradation. Isoform 1 and isoform 2 are expressed at higher level in branch curves of vessel walls and in atherosclerotic plaques relative to healthy segments of the same aortas (at protein level). Expressed in skeletal muscles, plasma cells and pancreatic beta cells. Isoform 1 and isoform 2 are expressed in gonadal adipose tissue. Isoform 1 is expressed in inguinal adipose tissue.

It localises to the endoplasmic reticulum. It is found in the nucleus. The protein resides in the cytoplasm. Its subcellular location is the endoplasmic reticulum membrane. The protein localises to the membrane. Its function is as follows. Functions as a transcription factor during endoplasmic reticulum stress by regulating the unfolded protein response (UPR). Required for cardiac myogenesis and hepatogenesis during embryonic development and the development of secretory tissues such as exocrine pancreas and salivary gland. Involved in differentiation of B lymphocytes to plasma cells and production of immunoglobulins. Modulates the cellular response to ER stress in a PIK3R-dependent manner. Binds to the cis-acting X box present in the promoter regions of major histocompatibility complex class II genes. Involved in VEGF-induced endothelial cell (EC) proliferation and retinal blood vessel formation during embryonic development but also for angiogenesis in adult tissues under ischemic conditions. Also functions as a major regulator of the UPR in obesity-induced insulin resistance and type 2 diabetes for the management of obesity and diabetes prevention. In terms of biological role, plays a role in the unconventional cytoplasmic splicing processing of its own mRNA triggered by the endoplasmic reticulum (ER) transmembrane endoribonuclease ERN1: upon ER stress, the emerging XBP1 polypeptide chain, as part of a mRNA-ribosome-nascent chain (R-RNC) complex, cotranslationally recruits its own unprocessed mRNA through transient docking to the ER membrane and translational pausing, therefore facilitating efficient IRE1-mediated XBP1 mRNA isoform 2 production. In endothelial cells (EC), associated with KDR, promotes IRE1-mediated XBP1 mRNA isoform 2 production in a vascular endothelial growth factor (VEGF)-dependent manner, leading to EC proliferation and angiogenesis. Functions as a negative feed-back regulator of the potent transcription factor XBP1 isoform 2 protein levels through proteasome-mediated degradation, thus preventing the constitutive activation of the ER stress response signaling pathway. Inhibits the transactivation activity of XBP1 isoform 2 in myeloma cells. Acts as a weak transcriptional factor. Together with HDAC3, contributes to the activation of NFE2L2-mediated HMOX1 transcription factor gene expression in a PI(3)K/mTORC2/Akt-dependent signaling pathway leading to EC survival under disturbed flow/oxidative stress. Binds to the ER stress response element (ERSE) upon ER stress. Binds to the consensus 5'-GATGACGTG[TG]N(3)[AT]T-3' sequence related to cAMP responsive element (CRE)-like sequences. Binds the Tax-responsive element (TRE) present in the long terminal repeat (LTR) of T-cell leukemia virus type 1 (HTLV-I) and to the TPA response elements (TRE). Associates preferentially to the HDAC3 gene promoter region in a static flow-dependent manner. Binds to the CDH5/VE-cadherin gene promoter region. Functionally, functions as a stress-inducible potent transcriptional activator during endoplasmic reticulum (ER) stress by inducing unfolded protein response (UPR) target genes via binding to the UPR element (UPRE). Up-regulates target genes encoding ER chaperones and ER-associated degradation (ERAD) components to enhance the capacity of productive folding and degradation mechanism, respectively, in order to maintain the homeostasis of the ER under ER stress. Plays a role in the production of immunoglobulins and interleukin-6 in the presence of stimuli required for plasma cell differentiation, and promotes as well membrane phospholipid biosynthesis necessary for ER expansion. Contributes to the VEGF-induced endothelial cell (EC) growth and proliferation in a Akt/GSK-dependent and/or -independent signaling pathway, respectively, leading to beta-catenin nuclear translocation and E2F2 gene expression. Promotes umbilical vein EC apoptosis and atherosclerotisis development in a caspase-dependent signaling pathway, and contributes to VEGF-induced EC proliferation and angiogenesis in adult tissues under ischemic conditions. Involved in the regulation of endostatin-induced autophagy in EC through BECN1 transcriptional activation. Plays a role as an oncogene by promoting tumor progression: stimulates zinc finger protein SNAI1 transcription to induce epithelial-to-mesenchymal (EMT) transition, cell migration and invasion of breast cancer cells. Involved in adipocyte differentiation by regulating lipogenic gene expression during lactation. Plays a role in the survival of both dopaminergic neurons of the substantia nigra pars compacta (SNpc), by maintaining protein homeostasis and of myeloma cells. Increases insulin sensitivity in the liver as a response to a high carbohydrate diet, resulting in improved glucose tolerance. Also improves glucose homeostasis in an ER stress- and/or insulin-independent manner through both binding and proteasome-induced degradation of the transcription factor FOXO1, hence resulting in suppression of gluconeogenic genes expression and in a reduction of blood glucose levels. Controls the induction of de novo fatty acid synthesis in hepatocytes by regulating the expression of a subset of lipogenic genes in an ER stress- and UPR-independent manner. Binds to the 5'-CCACG-3' motif in the PPARG promoter. Associates preferentially to the HDAC3 gene promoter region in a disturbed flow-dependent manner. Binds to the BECN1 gene promoter region. Binds to the CDH5/VE-cadherin gene promoter region. Binds to the ER stress response element (ERSE) upon ER stress. The chain is X-box-binding protein 1 from Mus musculus (Mouse).